The primary structure comprises 153 residues: 3-hydroxyacyl-[acyl-carrier-protein] dehydratase FabZ (153 aa).

Residue histidine 54 is part of the active site.

It belongs to the thioester dehydratase family. FabZ subfamily.

The protein resides in the cytoplasm. It carries out the reaction a (3R)-hydroxyacyl-[ACP] = a (2E)-enoyl-[ACP] + H2O. In terms of biological role, involved in unsaturated fatty acids biosynthesis. Catalyzes the dehydration of short chain beta-hydroxyacyl-ACPs and long chain saturated and unsaturated beta-hydroxyacyl-ACPs. This is 3-hydroxyacyl-[acyl-carrier-protein] dehydratase FabZ from Shewanella loihica (strain ATCC BAA-1088 / PV-4).